The following is a 440-amino-acid chain: Probable D-serine dehydratase (440 aa).

Position 111 is an N6-(pyridoxal phosphate)lysine (Lys-111).

The protein belongs to the serine/threonine dehydratase family. DsdA subfamily. The cofactor is pyridoxal 5'-phosphate.

It carries out the reaction D-serine = pyruvate + NH4(+). The sequence is that of Probable D-serine dehydratase from Rhizobium leguminosarum bv. trifolii (strain WSM2304).